A 590-amino-acid polypeptide reads, in one-letter code: Protein NRT1/ PTR FAMILY 6.4 (590 aa).

Positions 1–24 (MVHVSSSHGAKDGSEEAYDYRGNP) are disordered. 12 helical membrane-spanning segments follow: residues 48 to 68 (ICVMGISMNLVTYLVGDLHIS), 73 to 93 (ATIVTNFMGTLNLLGLLGGFL), 104 to 124 (VAISASVTALGVLLLTVATTI), 147 to 167 (GHQLALLYVALYTIALGGGGI), 197 to 217 (FYFSISVGSLFAVIALVYVQD), 222 to 242 (GWGYGISAATMVVAAIVLLCG), 332 to 352 (VKLVMKLVPIWATNILFWTIY), 371 to 391 (GSFTVPAGSYSAFLILTILLF), 419 to 439 (IGVGLVFSMAAMAVAAVIENA), 453 to 473 (AFWLVPQYFLVGAGEAFAYVG), 492 to 512 (GLFLSTISMGFFVSSLLVSLV), and 533 to 553 (FYWLLVVLGALNFLIFIVFAM).

Belongs to the major facilitator superfamily. Proton-dependent oligopeptide transporter (POT/PTR) (TC 2.A.17) family. Expressed in leaves, flowers and siliques. Detected in leaves.

It localises to the membrane. Low-affinity nitrate transporter. This Arabidopsis thaliana (Mouse-ear cress) protein is Protein NRT1/ PTR FAMILY 6.4 (NPF6.4).